The sequence spans 386 residues: Probable family 17 glucosidase SCW4 (386 aa).

The signal sequence occupies residues 1-19 (MRLSNLIASASLLSAATLA). The propeptide occupies 20-30 (APANHEHKDKR). The tract at residues 88–127 (ENNSQVSAAASPASSSAATSTQSSSSSQASSSSSSGEDVS) is disordered. Residue N89 is glycosylated (N-linked (GlcNAc...) asparagine). Catalysis depends on E323, which acts as the Nucleophile.

It belongs to the glycosyl hydrolase 17 family. N-glycosylated.

It localises to the secreted. The protein localises to the cell wall. Its function is as follows. Glucanases possibly play a role in cell expansion during growth, in cell-cell fusion during mating, and in spore release during sporulation. In Saccharomyces cerevisiae (strain ATCC 204508 / S288c) (Baker's yeast), this protein is Probable family 17 glucosidase SCW4 (SCW4).